The following is a 500-amino-acid chain: Versicolorin B desaturase (500 aa).

The helical transmembrane segment at 3 to 23 threads the bilayer; it reads FLSLPSLVIVIPVGYLLFHLG. Asparagine 243 and asparagine 400 each carry an N-linked (GlcNAc...) asparagine glycan. Heme is bound at residue cysteine 438.

It belongs to the cytochrome P450 family. It depends on heme as a cofactor.

The protein resides in the membrane. The catalysed reaction is versicolorin B + NADPH + O2 + H(+) = versicolorin A + NADP(+) + 2 H2O. It participates in mycotoxin biosynthesis; aflatoxin biosynthesis. Versicolorin B desaturase; part of the gene cluster that mediates the biosynthesis of aflatoxins, a group of polyketide-derived furanocoumarins, and part of the most toxic and carcinogenic compounds among the known mycotoxins. The four major aflatoxins produced by A.parasiticus are aflatoxin B1 (AFB1), aflatoxin B2 (AFB2), aflatoxin G1 (AFG1) and aflatoxin G2 (AFG2). Within the aflatoxin pathway, the versicolorin B desaturase aflL catalyzes the conversion of versicolorin B (VERB) to versicolorin A (VERA). The biosynthesis of aflatoxins begins with the norsolorinic acid synthase aflC that combines a hexanoyl starter unit produced by the fatty acid synthase aflA/aflB and 7 malonyl-CoA extender units to synthesize the precursor NOR. The second step is the conversion of NOR to averantin and requires the norsolorinic acid ketoreductase aflD, which catalyzes the dehydration of norsolorinic acid to form (1'S)-averantin. The norsolorinic acid reductases aflE and aflF may also play a role in the conversion of NOR to AVN. The cytochrome P450 monooxygenase aflG then catalyzes the hydroxylation of AVN to 5'hydroxyaverantin (HAVN). The next step is performed by the 5'-hydroxyaverantin dehydrogenase aflH that transforms HAVN to 5'-oxoaverantin (OAVN) which is further converted to averufin (AVF) by aflK that plays a dual role in the pathway, as a 5'-oxoaverantin cyclase that mediates conversion of 5'-oxoaverantin, as well as a versicolorin B synthase in a later step in the pathway. The averufin oxidase aflI catalyzes the conversion of AVF to versiconal hemiacetal acetate (VHA). VHA is then the substrate for the versiconal hemiacetal acetate esterase aflJ to yield versiconal (VAL). Versicolorin B synthase aflK then converts VAL to versicolorin B (VERB) by closing the bisfuran ring of aflatoxin which is required for DNA-binding, thus giving to aflatoxin its activity as a mutagen. Then, the activity of the versicolorin B desaturase aflL leads to versicolorin A (VERA). A branch point starts from VERB since it can also be converted to dihydrodemethylsterigmatocystin (DMDHST), probably also by aflL, VERA being a precursor for aflatoxins B1 and G1, and DMDHST for aflatoxins B2 and G2. Next, the versicolorin reductase aflM and the cytochrome P450 monooxygenase aflN are involved in conversion of VERA to demethylsterigmatocystin (DMST). AflX and aflY seem also involved in this step, through probable aflX-mediated epoxide ring-opening step following versicolorin A oxidation and aflY-mediated Baeyer-Villiger oxidation required for the formation of the xanthone ring. The methyltransferase aflO then leads to the modification of DMST to sterigmatocystin (ST), and of DMDHST to dihydrosterigmatocystin (DHST). Both ST and DHST are then substrates of the O-methyltransferase aflP to yield O-methylsterigmatocystin (OMST) and dihydro-O-methylsterigmatocystin (DHOMST), respectively. Finally OMST is converted to aflatoxins B1 and G1, and DHOMST to aflatoxins B2 and G2, via the action of several enzymes including O-methylsterigmatocystin oxidoreductase aflQ, the cytochrome P450 monooxygenase aflU, but also the NADH-dependent flavin oxidoreductase nadA which is specifically required for the synthesis of AFG1. The chain is Versicolorin B desaturase from Aspergillus parasiticus (strain ATCC 56775 / NRRL 5862 / SRRC 143 / SU-1).